The chain runs to 193 residues: Sarcoplasmic calcium-binding protein, alpha chain (193 aa).

2 igE-binding epitope regions span residues 10 to 36 (KYVVRYMYDIDNNGFLDKNDFECLAVR) and 49 to 72 (DAYANNQKIMRNLWNEIAELADFN). EF-hand domains lie at 16 to 40 (MYDIDNNGFLDKNDFECLAVRNTLI), 57 to 92 (IMRNLWNEIAELADFNKDGEVTVDEFKQAVQKHCQG), and 101 to 136 (AFKVFIANQFKAIDVNGDGKVGLDEYRLDCITRSAF). Ca(2+)-binding residues include D18, D20, N22, D29, D70, N72, D74, E76, E81, D114, N116, D118, K120, and E125. Residues 130 to 147 (CITRSAFAEVKEIDDAYN) form an igE-binding epitope region.

SCPs from crayfish, lobster, and shrimp are polymorphic dimers; three isotypes (alpha-alpha, alpha-beta, and beta-beta) have been identified. Expressed in tail muscle (at protein level).

In terms of biological role, like parvalbumins, SCPs seem to be more abundant in fast contracting muscles, but no functional relationship can be established from this distribution. The chain is Sarcoplasmic calcium-binding protein, alpha chain from Penaeus vannamei (Whiteleg shrimp).